We begin with the raw amino-acid sequence, 433 residues long: Glutamate-1-semialdehyde 2,1-aminomutase (433 aa).

Lysine 272 is modified (N6-(pyridoxal phosphate)lysine).

This sequence belongs to the class-III pyridoxal-phosphate-dependent aminotransferase family. HemL subfamily. Homodimer. The cofactor is pyridoxal 5'-phosphate.

It is found in the cytoplasm. The catalysed reaction is (S)-4-amino-5-oxopentanoate = 5-aminolevulinate. Its pathway is porphyrin-containing compound metabolism; protoporphyrin-IX biosynthesis; 5-aminolevulinate from L-glutamyl-tRNA(Glu): step 2/2. The polypeptide is Glutamate-1-semialdehyde 2,1-aminomutase (Methylacidiphilum infernorum (isolate V4) (Methylokorus infernorum (strain V4))).